The chain runs to 203 residues: Protein Nef (203 aa).

Positions 1 to 25 (MGNKWSKSWPQVRERMRRAPAPAAD) are disordered. Gly-2 carries the N-myristoyl glycine; by host lipid modification. A Phosphoserine; by host modification is found at Ser-6. The acidic; interacts with host PACS1 and PACS2; stabilizes the interaction of NEF/MHC-I with host AP1M1; necessary for MHC-I internalization stretch occupies residues 59 to 62 (TEEE). The SH3-binding; interaction with Src family tyrosine kinases stretch occupies residues 66–75 (PVKPQIPLRP). The PxxP; stabilizes the interaction of NEF/MHC-I with host AP1M1; necessary for MHC-I internalization motif lies at 69–72 (PQIP). The mediates dimerization, Nef-PTE1 interaction stretch occupies residues 105 to 121 (EILDLWVHNTQGYFPDW). The interval 145–177 (VDPSEVEEANEGENNCLLHPICQHGIEDEEREV) is binding to ATP6V1H. The Dileucine internalization motif; necessary for CD4 internalization motif lies at 161-162 (LL). Residues 171-172 (ED) carry the Diacidic; necessary for CD4 internalization motif.

It belongs to the lentivirus primate group Nef protein family. In terms of assembly, monomer; cytosolic form. Homodimer; membrane bound form. Interacts with Nef associated p21-activated kinase (PAK2); this interaction activates PAK2. Associates with the Nef-MHC-I-AP1 complex; this complex is required for MHC-I internalization. Interacts (via C-terminus) with host PI3-kinase. Interacts with host PACS1; this interaction seems to be weak. Interacts with host PACS2. Interacts with host LCK and MAPK3; these interactions inhibit the kinase activity of the latter. Interacts with host ATP6V1H; this interaction may play a role in CD4 endocytosis. Associates with the CD4-Nef-AP2 complex; this complex is required for CD4 internalization. Interacts with host AP2 subunit alpha and AP2 subunit sigma2. Interacts with TCR-zeta chain; this interaction up-regulates the Fas ligand (FasL) surface expression. Interacts with host HCK, LYN, and SRC; these interactions activate the Src family kinases. Interacts with MAP3K5; this interaction inhibits the Fas and TNFR-mediated death signals. Interacts with beta-COP and PTE1. Interacts with human RACK1; this increases Nef phosphorylation by PKC. Interacts with TP53; this interaction decreases the half-life of TP53, protecting the infected cell against p53-mediated apoptosis. The virion-associated Nef proteins are cleaved by the viral protease to release the soluble C-terminal core protein. Nef is probably cleaved concomitantly with viral structural proteins on maturation of virus particles. In terms of processing, myristoylated. Post-translationally, phosphorylated on serine residues, probably by host PKCdelta and theta.

It localises to the host cell membrane. The protein localises to the virion. It is found in the secreted. The protein resides in the host Golgi apparatus membrane. Its function is as follows. Factor of infectivity and pathogenicity, required for optimal virus replication. Alters numerous pathways of T-lymphocyte function and down-regulates immunity surface molecules in order to evade host defense and increase viral infectivity. Alters the functionality of other immunity cells, like dendritic cells, monocytes/macrophages and NK cells. In terms of biological role, in infected CD4(+) T-lymphocytes, down-regulates the surface MHC-I, mature MHC-II, CD4, CD28, CCR5 and CXCR4 molecules. Mediates internalization and degradation of host CD4 through the interaction of with the cytoplasmic tail of CD4, the recruitment of AP-2 (clathrin adapter protein complex 2), internalization through clathrin coated pits, and subsequent transport to endosomes and lysosomes for degradation. Diverts host MHC-I molecules to the trans-Golgi network-associated endosomal compartments by an endocytic pathway to finally target them for degradation. MHC-I down-regulation may involve AP-1 (clathrin adapter protein complex 1) or possibly Src family kinase-ZAP70/Syk-PI3K cascade recruited by PACS2. In consequence infected cells are masked for immune recognition by cytotoxic T-lymphocytes. Decreasing the number of immune receptors also prevents reinfection by more HIV particles (superinfection). Down-regulates host SERINC3 and SERINC5 thereby excluding these proteins from the viral particles. Virion infectivity is drastically higher when SERINC3 or SERINC5 are excluded from the viral envelope, because these host antiviral proteins impair the membrane fusion event necessary for subsequent virion penetration. Functionally, bypasses host T-cell signaling by inducing a transcriptional program nearly identical to that of anti-CD3 cell activation. Interaction with TCR-zeta chain up-regulates the Fas ligand (FasL). Increasing surface FasL molecules and decreasing surface MHC-I molecules on infected CD4(+) cells send attacking cytotoxic CD8+ T-lymphocytes into apoptosis. Plays a role in optimizing the host cell environment for viral replication without causing cell death by apoptosis. Protects the infected cells from apoptosis in order to keep them alive until the next virus generation is ready to strike. Inhibits the Fas and TNFR-mediated death signals by blocking MAP3K5/ASK1. Decreases the half-life of TP53, protecting the infected cell against p53-mediated apoptosis. Inhibits the apoptotic signals regulated by the Bcl-2 family proteins through the formation of a Nef/PI3-kinase/PAK2 complex that leads to activation of PAK2 and induces phosphorylation of host BAD. Its function is as follows. Extracellular Nef protein targets CD4(+) T-lymphocytes for apoptosis by interacting with CXCR4 surface receptors. In Human immunodeficiency virus type 1 group M subtype J (isolate SE9280) (HIV-1), this protein is Protein Nef.